Here is a 273-residue protein sequence, read N- to C-terminus: Cilia- and flagella-associated protein 298-B (273 aa).

Belongs to the CFAP298 family.

Its subcellular location is the cytoplasm. The protein localises to the cytoskeleton. It is found in the cilium basal body. Plays a role in motile cilium function, possibly by acting on outer dynein arm assembly. Seems to be important for initiation rather than maintenance of cilium motility. Required for correct positioning of the cilium at the apical cell surface, suggesting an additional role in the planar cell polarity (PCP) pathway. May suppress canonical Wnt signaling activity. This Xenopus laevis (African clawed frog) protein is Cilia- and flagella-associated protein 298-B (cfap298-b).